The sequence spans 560 residues: General negative regulator of transcription subunit 5 (560 aa).

Coiled coils occupy residues 3–26 (QRKL…DFDD), 37–71 (SNSS…SKED), and 124–177 (KRDQ…NEMD). The disordered stretch occupies residues 212–330 (CEIQPSSSNN…DSEQQLNFPP (119 aa)). Positions 215 to 237 (QPSSSNNEAPKEGNNQTSLSSIR) are enriched in polar residues. Low complexity predominate over residues 273-288 (SQSISSTPTPVSTDTP). Polar residues predominate over residues 299–311 (FDNSTLGTPTTHV). At T306 the chain carries Phosphothreonine. K338 is covalently cross-linked (Glycyl lysine isopeptide (Lys-Gly) (interchain with G-Cter in ubiquitin)). S377 carries the post-translational modification Phosphoserine.

This sequence belongs to the CNOT2/3/5 family. Forms a NOT protein complex that comprises NOT1, NOT2, NOT3, NOT4 and NOT5. Subunit of the 1.0 MDa CCR4-NOT core complex that contains CCR4, CAF1, NOT1, NOT2, NOT3, NOT4, NOT5, CAF40 and CAF130. In the complex interacts with NOT1 and NOT2. The core complex probably is part of a less characterized 1.9 MDa CCR4-NOT complex.

The protein localises to the cytoplasm. The protein resides in the nucleus. Functionally, acts as a component of the CCR4-NOT core complex, which in the nucleus seems to be a general transcription factor, and in the cytoplasm the major mRNA deadenylase involved in mRNA turnover. The NOT protein subcomplex negatively regulates the basal and activated transcription of many genes. Preferentially affects TC-type TATA element-dependent transcription. Could directly or indirectly inhibit component(s) of the general transcription machinery. The protein is General negative regulator of transcription subunit 5 (NOT5) of Saccharomyces cerevisiae (strain ATCC 204508 / S288c) (Baker's yeast).